We begin with the raw amino-acid sequence, 65 residues long: DNA-directed RNA polymerase subunit omega (65 aa).

It belongs to the RNA polymerase subunit omega family. In terms of assembly, the RNAP catalytic core consists of 2 alpha, 1 beta, 1 beta' and 1 omega subunit. When a sigma factor is associated with the core the holoenzyme is formed, which can initiate transcription.

The enzyme catalyses RNA(n) + a ribonucleoside 5'-triphosphate = RNA(n+1) + diphosphate. Its function is as follows. Promotes RNA polymerase assembly. Latches the N- and C-terminal regions of the beta' subunit thereby facilitating its interaction with the beta and alpha subunits. The polypeptide is DNA-directed RNA polymerase subunit omega (Baumannia cicadellinicola subsp. Homalodisca coagulata).